Here is a 143-residue protein sequence, read N- to C-terminus: Transcriptional regulator MraZ (143 aa).

SpoVT-AbrB domains lie at 5–47 (EYLH…PLDE) and 76–119 (ATEC…SQAL).

Belongs to the MraZ family. In terms of assembly, forms oligomers.

It localises to the cytoplasm. The protein resides in the nucleoid. The polypeptide is Transcriptional regulator MraZ (Desulfitobacterium hafniense (strain DSM 10664 / DCB-2)).